The chain runs to 262 residues: Acyl-[acyl-carrier-protein]--UDP-N-acetylglucosamine O-acyltransferase (262 aa).

The protein belongs to the transferase hexapeptide repeat family. LpxA subfamily. Homotrimer.

The protein resides in the cytoplasm. The catalysed reaction is a (3R)-hydroxyacyl-[ACP] + UDP-N-acetyl-alpha-D-glucosamine = a UDP-3-O-[(3R)-3-hydroxyacyl]-N-acetyl-alpha-D-glucosamine + holo-[ACP]. Its pathway is glycolipid biosynthesis; lipid IV(A) biosynthesis; lipid IV(A) from (3R)-3-hydroxytetradecanoyl-[acyl-carrier-protein] and UDP-N-acetyl-alpha-D-glucosamine: step 1/6. Involved in the biosynthesis of lipid A, a phosphorylated glycolipid that anchors the lipopolysaccharide to the outer membrane of the cell. The chain is Acyl-[acyl-carrier-protein]--UDP-N-acetylglucosamine O-acyltransferase from Enterobacter sp. (strain 638).